We begin with the raw amino-acid sequence, 101 residues long: Small ribosomal subunit protein uS14 (101 aa).

It belongs to the universal ribosomal protein uS14 family. In terms of assembly, part of the 30S ribosomal subunit. Contacts proteins S3 and S10.

In terms of biological role, binds 16S rRNA, required for the assembly of 30S particles and may also be responsible for determining the conformation of the 16S rRNA at the A site. This is Small ribosomal subunit protein uS14 from Bordetella parapertussis (strain 12822 / ATCC BAA-587 / NCTC 13253).